The sequence spans 254 residues: MIKPIIVGNWKLNGSKKLIESFLKQLNQFLIKYYKICTVVIAPPVLYSHLIQNMFSSDKKNFFLGAQNIDIHFSGPFTGEISPIMLKDIGIKYVIIGHSERRLNHKETNEIIAKKFCMLKEENLVPILCIGETKKEKIDKKTKDICKKQIDIIFNMYGSNAFDNSIIAYEPIWSIGSGNSAAPKEVQCIAHFIRNYVKSKSNHNIENFFIQYGGSVTKNNAKELIYQKDIDGFLVGGASLQLEEFSKIIEITNI.

9–11 (NWK) lines the substrate pocket. The active-site Electrophile is H98. The active-site Proton acceptor is the E170. Residues G176, S215, and 236–237 (GG) contribute to the substrate site.

The protein belongs to the triosephosphate isomerase family. In terms of assembly, homodimer.

The protein resides in the cytoplasm. The catalysed reaction is D-glyceraldehyde 3-phosphate = dihydroxyacetone phosphate. Its pathway is carbohydrate biosynthesis; gluconeogenesis. It participates in carbohydrate degradation; glycolysis; D-glyceraldehyde 3-phosphate from glycerone phosphate: step 1/1. In terms of biological role, involved in the gluconeogenesis. Catalyzes stereospecifically the conversion of dihydroxyacetone phosphate (DHAP) to D-glyceraldehyde-3-phosphate (G3P). This Buchnera aphidicola subsp. Cinara cedri (strain Cc) protein is Triosephosphate isomerase.